We begin with the raw amino-acid sequence, 177 residues long: Large ribosomal subunit protein uL6 (177 aa).

The segment covering 154 to 171 has biased composition (basic and acidic residues); sequence PEPYKGKGVRYADEQVRR. Residues 154–177 form a disordered region; that stretch reads PEPYKGKGVRYADEQVRRKEAKKK.

The protein belongs to the universal ribosomal protein uL6 family. In terms of assembly, part of the 50S ribosomal subunit.

This protein binds to the 23S rRNA, and is important in its secondary structure. It is located near the subunit interface in the base of the L7/L12 stalk, and near the tRNA binding site of the peptidyltransferase center. This Marinobacter nauticus (strain ATCC 700491 / DSM 11845 / VT8) (Marinobacter aquaeolei) protein is Large ribosomal subunit protein uL6.